Consider the following 987-residue polypeptide: MQSQDSCYGVAFRSIITNDEALFKKTIHFYHTLGFATVKDFNKFKHGENSLLSSGTSQDSLREVWLESFKLSEVDASGFRIPQQEATNKAQSQGALLKIRLVMSAPIDETFDTNETATITYFSTDLNKIVEKFPKQAEKLSDTLVFLKDPMGNNITFSGLANATDSAPTSKDAFLEATSEDEIISRASSDASDLLRQTLGSSQKKKKIAVMTSGGDSPGMNAAVRAVVRTGIHFGCDVFAVYEGYEGLLRGGKYLKKMAWEDVRGWLSEGGTLIGTARSMEFRKREGRRQAAGNLISQGIDALVVCGGDGSLTGADLFRHEWPSLVDELVAEGRFTKEEVAPYKNLSIVGLVGSIDNDMSGTDSTIGAYSALERICEMVDYIDATAKSHSRAFVVEVMGRHCGWLALMAGIATGADYIFIPERAVPHGKWQDELKEVCQRHRSKGRRNNTIIVAEGALDDQLNPVTANDVKDALIELGLDTKVTILGHVQRGGTAVAHDRWLATLQGVDAVKAVLEFTPETPSPLIGILENKIIRMPLVESVKLTKSVATAIENKDFDKAISLRDTEFIELYENFLSTTVKDDGSELLPVSDRLNIGIVHVGAPSAALNAATRAATLYCLSHGHKPYAIMNGFSGLIQTGEVKELSWIDVENWHNLGGSEIGTNRSVASEDLGTIAYYFQKNKLDGLIILGGFEGFRSLKQLRDGRTQHPIFNIPMCLIPATVSNNVPGTEYSLGVDTCLNALVNYTDDIKQSASATRRRVFVCEVQGGHSGYIASFTGLITGAVSVYTPEKKIDLASIREDITLLKENFRHDKGENRNGKLLVRNEQASSVYSTQLLADIISEASKGKFGVRTAIPGHVQQGGVPSSKDRVTASRFAVKCIKFIEQWNKKNEASPNTDAKVLRFKFDTHGEKVPTVEHEDDSAAVICVNGSHVSFKPIANLWENETNVELRKGFEVHWAEYNKIGDILSGRLKLRAEVAALAAENK.

The segment at methionine 1–valine 580 is N-terminal catalytic PFK domain 1. Serine 3 carries the post-translational modification Phosphoserine. Residue lysine 89 forms a Glycyl lysine isopeptide (Lys-Gly) (interchain with G-Cter in ubiquitin) linkage. Phosphoserine occurs at positions 166, 179, 185, 189, and 192. Glycine 215 is a binding site for ATP. At serine 217 the chain carries Phosphoserine. ATP is bound by residues arginine 278–serine 279 and glycine 308–serine 311. Aspartate 309 contributes to the Mg(2+) binding site. Beta-D-fructose 6-phosphate contacts are provided by residues serine 354 to aspartate 356, arginine 391, and methionine 398 to arginine 400. The active-site Proton acceptor is the aspartate 356. The residue at position 450 (threonine 450) is a Phosphothreonine. Beta-D-fructose 6-phosphate is bound by residues glutamate 455, lysine 482, and histidine 488–arginine 491. Residues lysine 581–leucine 594 form an interdomain linker region. Residues asparagine 595–lysine 987 form a C-terminal regulatory PFK domain 2 region. Residue lysine 625 forms a Glycyl lysine isopeptide (Lys-Gly) (interchain with G-Cter in ubiquitin) linkage. Beta-D-fructose 2,6-bisphosphate-binding positions include arginine 665, threonine 722–asparagine 726, arginine 760, glutamine 767–glycine 769, glutamate 827, arginine 853, histidine 859–glutamine 862, and arginine 952.

Belongs to the phosphofructokinase type A (PFKA) family. ATP-dependent PFK group I subfamily. Eukaryotic two domain clade 'E' sub-subfamily. Heterooctamer of 4 alpha and 4 beta chains. It depends on Mg(2+) as a cofactor.

Its subcellular location is the cytoplasm. The protein resides in the mitochondrion outer membrane. The enzyme catalyses beta-D-fructose 6-phosphate + ATP = beta-D-fructose 1,6-bisphosphate + ADP + H(+). Its pathway is carbohydrate degradation; glycolysis; D-glyceraldehyde 3-phosphate and glycerone phosphate from D-glucose: step 3/4. Allosterically activated by ADP, AMP, or fructose 2,6-bisphosphate, and allosterically inhibited by ATP or citrate. Its function is as follows. Catalyzes the phosphorylation of D-fructose 6-phosphate to fructose 1,6-bisphosphate by ATP, the first committing step of glycolysis. This is ATP-dependent 6-phosphofructokinase subunit alpha (PFK1) from Saccharomyces cerevisiae (strain ATCC 204508 / S288c) (Baker's yeast).